The sequence spans 339 residues: Putative NADP-dependent oxidoreductase YfmJ (339 aa).

NADP(+) is bound by residues 156 to 159 (GAVG), Lys-182, Tyr-198, Asn-222, 244 to 250 (CGAISSY), 277 to 279 (FIV), and Asn-327.

It belongs to the NADP-dependent oxidoreductase L4BD family.

Its function is as follows. Putative quinone oxidoreductase that may contribute to the degradation of aromatic compounds. The polypeptide is Putative NADP-dependent oxidoreductase YfmJ (yfmJ) (Bacillus subtilis (strain 168)).